A 123-amino-acid polypeptide reads, in one-letter code: UPF0231 protein PMI2039 (123 aa).

It belongs to the UPF0231 family.

The chain is UPF0231 protein PMI2039 from Proteus mirabilis (strain HI4320).